Here is a 195-residue protein sequence, read N- to C-terminus: Apoptosis-associated speck-like protein containing a CARD (195 aa).

In terms of domain architecture, Pyrin spans 1 to 91 (MGCTRDAILD…AEQLQETMSK (91 aa)). Residues K55 and K174 each participate in a glycyl lysine isopeptide (Lys-Gly) (interchain with G-Cter in ubiquitin) cross-link. The CARD domain maps to 107 to 195 (TAKPGLHFVD…PYLVDDLEQS (89 aa)). At S195 the chain carries Phosphoserine.

In terms of assembly, self-associates; enforced oligomerization induces apoptosis, NF-kappa-B regulation and interleukin-1 beta secretion. Homooligomers can form disk-like particles of approximately 12 nm diameter and approximately 1 nm height. Component of several inflammasomes containing one pattern recognition receptor/sensor, such as NLRP1, NLRP2, NLRP3, NLRP6, NLRC4, AIM2, MEFV or NOD2, and probably NLRC4 or NLRP12. Major component of the ASC pyroptosome, a 1-2 um supramolecular assembly (one per macrophage cell) which consists of oligomerized PYCARD dimers and CASP1. Interacts with CASP1 (precursor form); the interaction induces activation of CASP1 leading to the processing of interleukin-1 beta; PYCARD competes with RIPK2 for binding to CASP1. Interacts with NLRP3; the interaction requires the homooligomerization of NLRP3. Interacts with NLRP2, NLRC4, MEFV, CARD16, AIM2, NOD2, RIGI, RIPK2, PYDC1, PYDC2, NLRP10, CASP8, CHUK, IKBKB and BAX. Component of the AIM2 PANoptosome complex, a multiprotein complex that drives inflammatory cell death (PANoptosis). Phosphorylated. Post-translationally, 'Lys-63'-linked polyubiquitination by TRAF3 is critical for speck formation and inflammasome activation. 'Lys-63'-linked deubiquitinated by USP50; a crucial step for NLRP3-mediated inflammasome activation. 'Lys-63'-linked polyubiquitination by PELI1 is also critical for speck formation and inflammasome activation. Deubiquitinated by USP3 that cleaves 'Lys-48'-linked ubiquitin chains and strengthens its stability by blocking proteasomal degradation.

The protein localises to the cytoplasm. Its subcellular location is the inflammasome. The protein resides in the endoplasmic reticulum. It is found in the mitochondrion. It localises to the nucleus. Functionally, functions as a key mediator in apoptosis and inflammation. Promotes caspase-mediated apoptosis involving predominantly caspase-8 and also caspase-9 in a probable cell type-specific manner. Involved in activation of the mitochondrial apoptotic pathway, promotes caspase-8-dependent proteolytic maturation of BID independently of FADD in certain cell types and also mediates mitochondrial translocation of BAX and activates BAX-dependent apoptosis coupled to activation of caspase-9, -2 and -3. Involved in innate immune response by acting as an integral adapter in the assembly of various inflammasomes (NLRP2, NLRP3, NLRP6 and AIM2) which recruit and activate caspase-1 leading to processing and secretion of pro-inflammatory cytokines. Caspase-1-dependent inflammation leads to macrophage pyroptosis, a form of cell death. The function as activating adapter in different types of inflammasomes is mediated by the pyrin and CARD domains and their homotypic interactions. Clustered PYCARD nucleates the formation of caspase-1 filaments through the interaction of their respective CARD domains, acting as a platform for of caspase-1 polymerization. In the NLRC4 inflammasomes seems not be required but facilitates the processing of procaspase-1. In cooperation with NOD2 involved in an inflammasome activated by bacterial muramyl dipeptide leading to caspase-1 activation. May be involved in RIGI-triggered pro-inflammatory responses and inflammasome activation. In collaboration with AIM2 which detects cytosolic double-stranded DNA may also be involved in a caspase-1-independent cell death that involves caspase-8. In adaptive immunity may be involved in maturation of dendritic cells to stimulate T-cell immunity and in cytoskeletal rearrangements coupled to chemotaxis and antigen uptake may be involved in post-transcriptional regulation of the guanine nucleotide exchange factor DOCK2; the latter function is proposed to involve the nuclear form. Also involved in transcriptional activation of cytokines and chemokines independent of the inflammasome; this function may involve AP-1, NF-kappa-B, MAPK and caspase-8 signaling pathways. For regulation of NF-kappa-B activating and inhibiting functions have been reported. Modulates NF-kappa-B induction at the level of the IKK complex by inhibiting kinase activity of CHUK and IKBK. Proposed to compete with RIPK2 for association with CASP1 thereby down-regulating CASP1-mediated RIPK2-dependent NF-kappa-B activation and activating interleukin-1 beta processing. Modulates host resistance to DNA virus infection, probably by inducing the cleavage of and inactivating CGAS in presence of cytoplasmic double-stranded DNA. This Bos taurus (Bovine) protein is Apoptosis-associated speck-like protein containing a CARD (PYCARD).